Consider the following 342-residue polypeptide: S-adenosylmethionine:tRNA ribosyltransferase-isomerase (342 aa).

It belongs to the QueA family. In terms of assembly, monomer.

It is found in the cytoplasm. The catalysed reaction is 7-aminomethyl-7-carbaguanosine(34) in tRNA + S-adenosyl-L-methionine = epoxyqueuosine(34) in tRNA + adenine + L-methionine + 2 H(+). It functions in the pathway tRNA modification; tRNA-queuosine biosynthesis. In terms of biological role, transfers and isomerizes the ribose moiety from AdoMet to the 7-aminomethyl group of 7-deazaguanine (preQ1-tRNA) to give epoxyqueuosine (oQ-tRNA). The chain is S-adenosylmethionine:tRNA ribosyltransferase-isomerase from Brevibacillus brevis (strain 47 / JCM 6285 / NBRC 100599).